The sequence spans 311 residues: Ribosomal RNA small subunit methyltransferase H (311 aa).

S-adenosyl-L-methionine is bound by residues 32–34, Asp-52, Phe-79, Asp-100, and Gln-107; that span reads AGH.

This sequence belongs to the methyltransferase superfamily. RsmH family.

It localises to the cytoplasm. The catalysed reaction is cytidine(1402) in 16S rRNA + S-adenosyl-L-methionine = N(4)-methylcytidine(1402) in 16S rRNA + S-adenosyl-L-homocysteine + H(+). Specifically methylates the N4 position of cytidine in position 1402 (C1402) of 16S rRNA. The chain is Ribosomal RNA small subunit methyltransferase H from Staphylococcus aureus (strain COL).